We begin with the raw amino-acid sequence, 292 residues long: ATP synthase gamma chain (292 aa).

This sequence belongs to the ATPase gamma chain family. As to quaternary structure, F-type ATPases have 2 components, CF(1) - the catalytic core - and CF(0) - the membrane proton channel. CF(1) has five subunits: alpha(3), beta(3), gamma(1), delta(1), epsilon(1). CF(0) has three main subunits: a, b and c.

The protein resides in the cell inner membrane. In terms of biological role, produces ATP from ADP in the presence of a proton gradient across the membrane. The gamma chain is believed to be important in regulating ATPase activity and the flow of protons through the CF(0) complex. The sequence is that of ATP synthase gamma chain from Hyphomonas neptunium (strain ATCC 15444).